Reading from the N-terminus, the 191-residue chain is Apoptosis regulator BHRF1 (191 aa).

An interaction with host VRK2 region spans residues 1–18 (MAYSTREILLALCIRDSR). N-linked (GlcNAc...) asparagine; by host glycosylation is present at N22. The BH1 motif lies at 89 to 109 (EIFHRGDPSLGRALAWMAWCM). The segment at 89-142 (EIFHRGDPSLGRALAWMAWCMHACRTLCCNQSTPYYVVDLSVRGMLEASEGLDG) is interaction with host VRK2. N-linked (GlcNAc...) asparagine; by host glycosylation occurs at N118. Positions 142–157 (GWIHQQGGWSTLIEDN) match the BH2 motif. A helical transmembrane segment spans residues 166–186 (WTLFLAGLTLSLLVICSYLFI).

Belongs to the Bcl-2 family. As to quaternary structure, interacts with isoform 1 of host VRK2; this interaction is involved in protecting cells from apoptosis. Interacts with host PRA1; this interaction seems to modulate BHRF1 anti-apoptotic activity. Interacts with host BCL2L11. Interacts with host BAD and BBC3. Interacts with BALF1; BALF1 acting as a negative regulator of the survival function of BHRF1. Interacts with host BECN1.

The protein localises to the host membrane. It is found in the host mitochondrion. In terms of biological role, prevents premature death of the host cell during virus production, which would otherwise reduce the amount of progeny virus. Acts as a host B-cell leukemia/lymphoma 2 (Bcl-2) homolog, and interacts with pro-apoptotic proteins to prevent mitochondria permeabilization, release of cytochrome c and subsequent apoptosis of the host cell. In addition, plays a role in the inhibiton of host BECN1-mediated starvation-induced autophagy without affecting basal levels of autophagy. This chain is Apoptosis regulator BHRF1, found in Epstein-Barr virus (strain GD1) (HHV-4).